A 398-amino-acid chain; its full sequence is MNKKKLGVRLLSLLALGGFVLANPVFADQNFARNEKEAKDSAITFIQKSAAIKAGARSAEDIKLDKVNLGGELSGSNMYVYNISTGGFVIVSGDKRSPEILGYSTSGSFDANGKENIASFMESYVEQIKENKKLDTTYAGTAEIKQPVVKSLLDSKGIHYNQGNPYNLLTPVIEKVKPGEQSFVGQHAATGCVATATAQIMKYHNYPNKGLKDYTYTLSSNNPYFNHPKNLFAAISTRQYNWNNILPTYSGRESNVQKMAISELMADVGISVDMDYGPSSGSAGSSRVQRALKENFGYNQSVHQINRGDFSKQDWEAQIDKELSQNQPVYYQGVGKVGGHAFVIDGADGRNFYHVNWGWGGVSDGFFRLDALNPSALGTGGGAGGFNGYQSAVVGIKP.

A signal peptide spans 1–27 (MNKKKLGVRLLSLLALGGFVLANPVFA). Positions 28 to 145 (DQNFARNEKE…TTYAGTAEIK (118 aa)) are excised as a propeptide. The active-site Nucleophile is the Cys-192. Position 192 is a cysteine methyl disulfide; in zymogen form (Cys-192). The a protein site is built by Ser-282 and Gly-339. His-340 acts as the Proton acceptor in catalysis. Residues 368–390 (RLDALNPSALGTGGGAGGFNGYQ) are C-terminal active site loop.

This sequence belongs to the peptidase C10 family. As to quaternary structure, monomer. Post-translationally, the mature protease is derived from the precursor sequence by cleavage, either in cis via an autocatalytic mechanism, or in trans by mature SpeB or host proteases (trypsin, plasmin or subtilisin). Maturation can involve a number of protein cleavage intermediates. Mature SpeB probably plays the most important role in protein maturation in physiological conditions. Methylthiolation at Cys-192 of the inactive zymogen form is probably involved in the mechanism of secretion of the proteinase into the culture fluid.

The protein localises to the secreted. It is found in the host extracellular space. The protein resides in the host cytoplasm. The enzyme catalyses Preferential cleavage with hydrophobic residues at P2, P1 and P1'.. Its activity is regulated as follows. Synthesized as an inactive zymogen to protect the intracellular components of the bacteria from proteolytic activity during protein production. Once secreted into the extracellular milieu, cleaved into the active protease: maturation can be mediated in cis by autocatalytic cleavage, or in trans by mature SpeB or host proteases. Protease activity is strongly inhibited by zinc and copper, which prevent its maturation into an active protease: inhibition by metal ions may be required to prevent proteolysis of streptococcal proteins. In terms of biological role, cysteine protease that acts as a key streptococcal virulence factor by cleaving host proteins involved in immune response. Triggers inflammation by mediating cleavage of host proteins, which can both promote host pathogenesis by triggering sterile inflammation and/or restrict streptococcal infection, depending on host immune statue and infection site. Cleaves host gasdermin-A (GSDMA) in epithelial cells, promoting GSDMA activation and formation of gasdermin pores, triggering pyroptosis. Pyroptosis triggers the elimination of the infected skin cell, depriving the pathogen of its protective niche, while inducing an inflammatory response. This ultimately prevents bacterial penetration of the epithelial barrier and a subsequent systemic dissemination of the pathogen. Also mediates cleavage of the cytokine precursor interleukin-1 beta (IL1B) to its mature form, resulting in inflammation and septic shock. SpeB-mediated maturation of IL1B plays a dual role depending on infection site: while IL1B inflammatory response prevents bacterial growth during invasive skin infections, it promotes streptococcal infection of the nasopharynx by disrupting colonization resistance mediated by the microbiota. Inhibits host autophagy be catalyzing cleavage and inactivation of key autophagy factors, such as CALCOCO2, NBR1 and SQSTM1. Cleaves and inhibits a number of complement factors, such as C2, C3-beta chain of C3, C4, C5 or SERPING1, thereby promoting evasion of host immunity. May also impair adaptive immunity by catalyzing cleavage and degradation of host immunoglobulins to promote immune system evasion; the relevance of this activity is however unsure in vivo. Catalyzes maturation and release of the peptide hormone bradykinin from the precursor Kininogen-1 (KNG1) to produce hypotension during septic shock. Also involved in bacterial translocation across the host epithelial barrier by mediating cleavage and degradation of host epithelial junction proteins, such as CDH1 and OCLN. Additionally, has been involved in degradation of fibronectin and vitronectin, two host extracellular matrix proteins involved in tissue integrity. Also able to catalyze cleavage and degradation of streptococcal proteins, such as C5a peptidase, EndoS or SmeZ. Degradation of streptococcal proteins is however strictly regulated to preserve integrity of other virulence factors. The chain is Streptopain from Streptococcus pyogenes serotype M1.